The chain runs to 592 residues: Glutamine--fructose-6-phosphate aminotransferase [isomerizing] (592 aa).

The Nucleophile; for GATase activity role is filled by Cys-2. One can recognise a Glutamine amidotransferase type-2 domain in the interval 2–217 (CGIVGYVGRD…DGEIADLTPD (216 aa)). SIS domains follow at residues 277 to 416 (IPFK…EREN) and 441 to 582 (VAEK…VDQP). Catalysis depends on Lys-587, which acts as the For Fru-6P isomerization activity.

As to quaternary structure, homodimer.

It is found in the cytoplasm. The catalysed reaction is D-fructose 6-phosphate + L-glutamine = D-glucosamine 6-phosphate + L-glutamate. Catalyzes the first step in hexosamine metabolism, converting fructose-6P into glucosamine-6P using glutamine as a nitrogen source. This is Glutamine--fructose-6-phosphate aminotransferase [isomerizing] from Aquifex aeolicus (strain VF5).